The primary structure comprises 1129 residues: Protein DWARF 53-LIKE (1129 aa).

The Clp R domain maps to 8 to 180; sequence ARQCLSPAAV…KLAILRPAPP (173 aa). 2 repeat regions span residues 12 to 85 and 102 to 180; these read LSPA…LDRL and VSNS…PAPP. Positions 519 to 573 are disordered; that stretch reads RYIGVPADKERSANPSKGSESIGVQKDVIKPCAVSAVHSSSTARPISSPSVTNKR. Positions 557–568 are enriched in low complexity; sequence SSSTARPISSPS. The EAR 1 signature appears at 577 to 581; the sequence is LVLNL. Positions 587–654 are disordered; sequence KSDENLQERG…KRVEDSERSV (68 aa). Residues 596 to 608 are compositionally biased toward polar residues; it reads GMQSQHGTLSNAD. The span at 645–654 shows a compositional bias: basic and acidic residues; it reads KRVEDSERSV. 2 short sequence motifs (EAR) span residues 798–802 and 975–980; these read LDLNL and FDLNLP. The interval 975 to 1001 is disordered; sequence FDLNLPVDEDEPFDADDDSSSHENSYG. Acidic residues predominate over residues 981–992; that stretch reads VDEDEPFDADDD.

Belongs to the ClpA/ClpB family. Post-translationally, polyubiquitinated. Strigolactone, but not karrikin, triggers rapid SCF(D3)-dependent degradation via the proteasome.

Functionally, repressor of strigolactones (SL) signaling. Subjected to a negative feedback control of SL signaling. The sequence is that of Protein DWARF 53-LIKE from Oryza sativa subsp. japonica (Rice).